A 328-amino-acid chain; its full sequence is Tetraacyldisaccharide 4'-kinase (328 aa).

Thr-55 to Thr-62 contributes to the ATP binding site.

Belongs to the LpxK family.

The enzyme catalyses a lipid A disaccharide + ATP = a lipid IVA + ADP + H(+). It participates in glycolipid biosynthesis; lipid IV(A) biosynthesis; lipid IV(A) from (3R)-3-hydroxytetradecanoyl-[acyl-carrier-protein] and UDP-N-acetyl-alpha-D-glucosamine: step 6/6. Functionally, transfers the gamma-phosphate of ATP to the 4'-position of a tetraacyldisaccharide 1-phosphate intermediate (termed DS-1-P) to form tetraacyldisaccharide 1,4'-bis-phosphate (lipid IVA). The polypeptide is Tetraacyldisaccharide 4'-kinase (Escherichia coli O45:K1 (strain S88 / ExPEC)).